A 65-amino-acid polypeptide reads, in one-letter code: Large ribosomal subunit protein bL35 (65 aa).

Disordered stretches follow at residues 1–23 (MPKL…GGFK) and 36–65 (MTTK…MPYA). Polar residues predominate over residues 54 to 65 (DTTSLVQQMPYA).

The protein belongs to the bacterial ribosomal protein bL35 family.

In Francisella tularensis subsp. tularensis (strain FSC 198), this protein is Large ribosomal subunit protein bL35.